A 48-amino-acid chain; its full sequence is Large ribosomal subunit protein bL32 (48 aa).

The protein belongs to the bacterial ribosomal protein bL32 family.

This Helicobacter pylori (strain P12) protein is Large ribosomal subunit protein bL32.